A 204-amino-acid polypeptide reads, in one-letter code: N-(5'-phosphoribosyl)anthranilate isomerase (204 aa).

Belongs to the TrpF family.

It carries out the reaction N-(5-phospho-beta-D-ribosyl)anthranilate = 1-(2-carboxyphenylamino)-1-deoxy-D-ribulose 5-phosphate. The protein operates within amino-acid biosynthesis; L-tryptophan biosynthesis; L-tryptophan from chorismate: step 3/5. This is N-(5'-phosphoribosyl)anthranilate isomerase from Bacillus cereus (strain ZK / E33L).